The sequence spans 778 residues: Protein PHOTOPERIODIC CONTROL OF HYPOCOTYL 1 (778 aa).

Disordered stretches follow at residues 74–95, 186–283, and 316–335; these read QKRE…VGSS, HNRG…NSAT, and KTSP…KEAS. A compositionally biased stretch (basic and acidic residues) spans 198-212; sequence SSKDTQEDGPRKNES. The segment covering 230–247 has biased composition (low complexity); sequence SGSISSSSTKGKGIKGYS. The span at 265 to 275 shows a compositional bias: basic and acidic residues; it reads PDRENSVDGHQ. Residues 317-326 show a composition bias toward polar residues; the sequence is TSPSDSSETK. Residues 470–505 enclose the F-box domain; that stretch reads WPLLPNDLLELIMGHLETSFEIFLFRSVCSSWRSVV.

In terms of assembly, interacts with light-activated phyB. Binds directly to PIF1 and COP1. In terms of processing, ubiquitinated by COP1 in darkness; this leads to proteasomal degradation. Mainly expressed in cotyledons, hypocotyls, leaves and roots.

It is found in the nucleus. Its function is as follows. Together with PCHL, regulates growth and development adaptation to the ambient environment by controlling negatively phytochrome B (phyB) dark reversion, a temperature-dependent thermal relaxation process during which phyB reverts from the active to the inactive state. Contributes to red (R) light-triggered photomorphogenesis. Promotes various light responses such as seed germination, hypocotyl gravitropism and chlorophyll biosynthesis, via direct interaction with PIF1 and COP1. Prevents DNA-binding ability of PIF1 to negatively regulate the expressions of its target genes. Facilitates the physical interaction between phyB and PIF1 and the subsequent light-induced degradation of PIF1. This chain is Protein PHOTOPERIODIC CONTROL OF HYPOCOTYL 1, found in Arabidopsis thaliana (Mouse-ear cress).